We begin with the raw amino-acid sequence, 142 residues long: gSG7 salivary protein (142 aa).

An N-terminal signal peptide occupies residues 1–26; the sequence is MAVRMTVILPLAMALICLMQAEPATA. 2 disulfide bridges follow: cysteine 84/cysteine 139 and cysteine 107/cysteine 117.

As to quaternary structure, associates with activated host C3-convertase complex C3bBb (C3-CFB). Interacts with host properdin (CFP), a regulator of the alternate pathway of complement. In terms of tissue distribution, female salivary gland (at protein level).

It is found in the secreted. Salivary protein that potently inhibits the alternative pathway of complement system activation in the host while having no inhibitory effect on the classical or lectin pathways. Binds and stabilizes activated host C3-convertase complex C3bBb (C3-CFB) and inhibits its convertase activity. Enhances accumulation of C3bBb on immobilized properdin. The protein is gSG7 salivary protein of Anopheles albimanus (New world malaria mosquito).